The following is a 603-amino-acid chain: Protein Spindly (603 aa).

Met1 carries the N-acetylmethionine modification. Positions 1 to 442 (MESDVIADLR…LKLKYEPEEK (442 aa)) form a coiled coil. Residues Ser513 and Ser553 each carry the phosphoserine modification. Residues 542–577 (ALSERSRNTPNSPRLAAESRLQREVKQGKETASKLE) are disordered. Residues 561–577 (RLQREVKQGKETASKLE) show a composition bias toward basic and acidic residues.

Belongs to the Spindly family. As to quaternary structure, interacts with KNTC1 and ZW10. These interactions appear weak and may be transient or indirect. Interacts with dynein intermediate chain and dynactin (DCTN1). Interacts with the catalytically active form of USP45. Monoubiquitinated with'Lys-48' linkage. Deubiquitinated by USP45.

The protein resides in the cytoplasm. It localises to the cytoskeleton. Its subcellular location is the microtubule organizing center. It is found in the centrosome. The protein localises to the chromosome. The protein resides in the centromere. It localises to the kinetochore. Its subcellular location is the nucleus. It is found in the spindle pole. Functionally, required for the localization of dynein and dynactin to the mitotic kintochore. Dynein is believed to control the initial lateral interaction between the kinetochore and spindle microtubules and to facilitate the subsequent formation of end-on kinetochore-microtubule attachments mediated by the NDC80 complex. Also required for correct spindle orientation. Does not appear to be required for the removal of spindle assembly checkpoint (SAC) proteins from the kinetochore upon bipolar spindle attachment. Acts as an adapter protein linking the dynein motor complex to various cargos and converts dynein from a non-processive to a highly processive motor in the presence of dynactin. Facilitates the interaction between dynein and dynactin and activates dynein processivity (the ability to move along a microtubule for a long distance without falling off the track). Plays a role in cell migration. The polypeptide is Protein Spindly (Bos taurus (Bovine)).